The sequence spans 182 residues: Mu-like prophage FluMu protein gp45 (182 aa).

Positions threonine 159 to proline 182 are disordered. The span at lysine 169 to proline 182 shows a compositional bias: basic and acidic residues.

This sequence to phage Mu protein gp45.

The polypeptide is Mu-like prophage FluMu protein gp45 (Haemophilus influenzae (strain ATCC 51907 / DSM 11121 / KW20 / Rd)).